Here is a 407-residue protein sequence, read N- to C-terminus: Putative replication protein A (407 aa).

It belongs to the ParA family.

This chain is Putative replication protein A, found in Sinorhizobium fredii (strain NBRC 101917 / NGR234).